We begin with the raw amino-acid sequence, 343 residues long: N-acetyl-gamma-glutamyl-phosphate reductase (343 aa).

C147 is a catalytic residue.

The protein belongs to the NAGSA dehydrogenase family. Type 1 subfamily.

Its subcellular location is the cytoplasm. It catalyses the reaction N-acetyl-L-glutamate 5-semialdehyde + phosphate + NADP(+) = N-acetyl-L-glutamyl 5-phosphate + NADPH + H(+). The protein operates within amino-acid biosynthesis; L-arginine biosynthesis; N(2)-acetyl-L-ornithine from L-glutamate: step 3/4. Catalyzes the NADPH-dependent reduction of N-acetyl-5-glutamyl phosphate to yield N-acetyl-L-glutamate 5-semialdehyde. This is N-acetyl-gamma-glutamyl-phosphate reductase from Staphylococcus aureus (strain Mu3 / ATCC 700698).